The sequence spans 616 residues: Dihydroxy-acid dehydratase (616 aa).

Asp-81 contributes to the Mg(2+) binding site. Cys-122 provides a ligand contact to [2Fe-2S] cluster. Residues Asp-123 and Lys-124 each coordinate Mg(2+). N6-carboxylysine is present on Lys-124. Cys-195 lines the [2Fe-2S] cluster pocket. Glu-491 serves as a coordination point for Mg(2+). Ser-517 (proton acceptor) is an active-site residue.

It belongs to the IlvD/Edd family. In terms of assembly, homodimer. It depends on [2Fe-2S] cluster as a cofactor. Mg(2+) is required as a cofactor.

The enzyme catalyses (2R)-2,3-dihydroxy-3-methylbutanoate = 3-methyl-2-oxobutanoate + H2O. The catalysed reaction is (2R,3R)-2,3-dihydroxy-3-methylpentanoate = (S)-3-methyl-2-oxopentanoate + H2O. It functions in the pathway amino-acid biosynthesis; L-isoleucine biosynthesis; L-isoleucine from 2-oxobutanoate: step 3/4. The protein operates within amino-acid biosynthesis; L-valine biosynthesis; L-valine from pyruvate: step 3/4. Its function is as follows. Functions in the biosynthesis of branched-chain amino acids. Catalyzes the dehydration of (2R,3R)-2,3-dihydroxy-3-methylpentanoate (2,3-dihydroxy-3-methylvalerate) into 2-oxo-3-methylpentanoate (2-oxo-3-methylvalerate) and of (2R)-2,3-dihydroxy-3-methylbutanoate (2,3-dihydroxyisovalerate) into 2-oxo-3-methylbutanoate (2-oxoisovalerate), the penultimate precursor to L-isoleucine and L-valine, respectively. In Escherichia coli O81 (strain ED1a), this protein is Dihydroxy-acid dehydratase.